A 105-amino-acid chain; its full sequence is MPQITVVNQSGEESSVEASEGRTLMEVIRDSGFDELLALCGGCCSCATCHVHIDPAFMDKLPEMSEDENDLLDSSDHRNEYSRLSCQIPVTGALEGIKVTIAQED.

The 2Fe-2S ferredoxin-type domain maps to 2-105 (PQITVVNQSG…GIKVTIAQED (104 aa)). Positions 40, 46, 49, and 86 each coordinate [2Fe-2S] cluster.

It belongs to the adrenodoxin/putidaredoxin family. As to quaternary structure, monomer. The dicamba O-demethylase multicomponent enzyme system is composed of an oxygenase component (DdmC) and an electron transfer component formed by a ferredoxin reductase (DdmA1) and a ferredoxin (DdmB). In vitro, dicamba O-demethylase assays in which DdmA2 is substituted for DdmA1 demonstrate that the two enzymes possess nearly identical activities. Requires [2Fe-2S] cluster as cofactor.

Functionally, component of the dicamba O-demethylase multicomponent enzyme system involved in the degradation of the herbicide dicamba. In vitro, functions as an intermediate electron transfer protein. This is Dicamba O-demethylase, ferredoxin component from Stenotrophomonas maltophilia (Pseudomonas maltophilia).